The primary structure comprises 134 residues: Cell division protein SepF 1 (134 aa).

It belongs to the SepF family. In terms of assembly, homodimer. Interacts with FtsZ.

The protein localises to the cytoplasm. Its function is as follows. Cell division protein that is part of the divisome complex and is recruited early to the Z-ring. Probably stimulates Z-ring formation, perhaps through the cross-linking of FtsZ protofilaments. Its function overlaps with FtsA. The chain is Cell division protein SepF 1 from Streptomyces avermitilis (strain ATCC 31267 / DSM 46492 / JCM 5070 / NBRC 14893 / NCIMB 12804 / NRRL 8165 / MA-4680).